A 224-amino-acid chain; its full sequence is Putative O-methyltransferase MT1258 (224 aa).

Over residues 1 to 10 (MDGTPGHDDM) the composition is skewed to basic and acidic residues. The interval 1–21 (MDGTPGHDDMPGQPAPSRGES) is disordered. S-adenosyl-L-methionine is bound by residues Val-51, Glu-73, 75–76 (GT), Ser-81, Asp-99, and Ile-100. Asp-147 is a substrate binding site. Asp-149 contributes to the S-adenosyl-L-methionine binding site.

The protein belongs to the class I-like SAM-binding methyltransferase superfamily. Cation-dependent O-methyltransferase family.

In Mycobacterium tuberculosis (strain CDC 1551 / Oshkosh), this protein is Putative O-methyltransferase MT1258.